The sequence spans 31 residues: U6-ctenitoxin-Co1a (31 aa).

2 disulfide bridges follow: C2/C18 and C9/C23.

Expressed by the venom gland.

Its subcellular location is the secreted. In terms of biological role, antagonist of L-type calcium channels (Cav1/CACNA1). The chain is U6-ctenitoxin-Co1a from Ctenus ornatus (Brazilian spider).